Reading from the N-terminus, the 252-residue chain is Biosynthetic peptidoglycan transglycosylase (252 aa).

A helical transmembrane segment spans residues 23–43 (IGFLLGCIVAGVVAMQVYFFL).

This sequence belongs to the glycosyltransferase 51 family.

It is found in the cell inner membrane. It carries out the reaction [GlcNAc-(1-&gt;4)-Mur2Ac(oyl-L-Ala-gamma-D-Glu-L-Lys-D-Ala-D-Ala)](n)-di-trans,octa-cis-undecaprenyl diphosphate + beta-D-GlcNAc-(1-&gt;4)-Mur2Ac(oyl-L-Ala-gamma-D-Glu-L-Lys-D-Ala-D-Ala)-di-trans,octa-cis-undecaprenyl diphosphate = [GlcNAc-(1-&gt;4)-Mur2Ac(oyl-L-Ala-gamma-D-Glu-L-Lys-D-Ala-D-Ala)](n+1)-di-trans,octa-cis-undecaprenyl diphosphate + di-trans,octa-cis-undecaprenyl diphosphate + H(+). The protein operates within cell wall biogenesis; peptidoglycan biosynthesis. Peptidoglycan polymerase that catalyzes glycan chain elongation from lipid-linked precursors. This Cupriavidus pinatubonensis (strain JMP 134 / LMG 1197) (Cupriavidus necator (strain JMP 134)) protein is Biosynthetic peptidoglycan transglycosylase.